Reading from the N-terminus, the 125-residue chain is UPF0763 protein NAMH_0545 (125 aa).

The protein belongs to the UPF0763 family.

In Nautilia profundicola (strain ATCC BAA-1463 / DSM 18972 / AmH), this protein is UPF0763 protein NAMH_0545.